We begin with the raw amino-acid sequence, 429 residues long: Patatin-like phospholipase domain-containing protein 5 (429 aa).

Positions 12 to 181 (LSFSGAGYLG…SNNLPFADCP (170 aa)) constitute a PNPLA domain. The GXGXXG signature appears at 16–21 (GAGYLG). The GXSXG signature appears at 47–51 (GSSSG). The active-site Nucleophile is S49. D168 serves as the catalytic Proton acceptor. A DGA/G motif is present at residues 168 to 170 (DGA).

As to expression, expressed in brain and pituitary gland.

It catalyses the reaction a triacylglycerol + H2O = a diacylglycerol + a fatty acid + H(+). Has abundant triacylglycerol lipase activity. The sequence is that of Patatin-like phospholipase domain-containing protein 5 from Homo sapiens (Human).